The primary structure comprises 94 residues: Co-chaperonin GroES (94 aa).

Belongs to the GroES chaperonin family. In terms of assembly, heptamer of 7 subunits arranged in a ring. Interacts with the chaperonin GroEL.

Its subcellular location is the cytoplasm. Functionally, together with the chaperonin GroEL, plays an essential role in assisting protein folding. The GroEL-GroES system forms a nano-cage that allows encapsulation of the non-native substrate proteins and provides a physical environment optimized to promote and accelerate protein folding. GroES binds to the apical surface of the GroEL ring, thereby capping the opening of the GroEL channel. This is Co-chaperonin GroES from Clostridioides difficile (strain 630) (Peptoclostridium difficile).